The primary structure comprises 284 residues: Pantothenate synthetase (284 aa).

30-37 (MGALHDGH) contributes to the ATP binding site. His-37 (proton donor) is an active-site residue. A (R)-pantoate-binding site is contributed by Gln-61. Residue Gln-61 coordinates beta-alanine. Residue 147 to 150 (GEKD) participates in ATP binding. (R)-pantoate is bound at residue Gln-153. ATP-binding positions include Val-176 and 184–187 (KSSR).

The protein belongs to the pantothenate synthetase family. Homodimer.

It localises to the cytoplasm. It catalyses the reaction (R)-pantoate + beta-alanine + ATP = (R)-pantothenate + AMP + diphosphate + H(+). Its pathway is cofactor biosynthesis; (R)-pantothenate biosynthesis; (R)-pantothenate from (R)-pantoate and beta-alanine: step 1/1. Functionally, catalyzes the condensation of pantoate with beta-alanine in an ATP-dependent reaction via a pantoyl-adenylate intermediate. The polypeptide is Pantothenate synthetase (Chloroherpeton thalassium (strain ATCC 35110 / GB-78)).